The following is an 80-amino-acid chain: Myrmicitoxin(1)-Pr1a (80 aa).

The N-terminal stretch at 1 to 23 (MEIPKLLYIAVIAIGLSGSLTWA) is a signal peptide. The propeptide occupies 24–57 (TPLANPLAEAEAEAKATAEATAEALAEALAEPEP). At Phe-79 the chain carries Phenylalanine amide.

This sequence belongs to the formicidae venom clade 1 family. In terms of tissue distribution, expressed by the venom gland.

It is found in the secreted. In terms of biological role, vertebrate-selective toxin that causes pain by targeting voltage-gated sodium channels. This chain is Myrmicitoxin(1)-Pr1a, found in Pogonomyrmex rugosus (Desert harvester ant).